The following is a 1260-amino-acid chain: Myosin-1 (1260 aa).

The Myosin motor domain maps to 34-713; that stretch reads VGVSDLTLLS…TLFALEHMRD (680 aa). Residue 127–134 participates in ATP binding; that stretch reads GESGAGKT. Phosphoserine is present on Ser-355. The actin-binding stretch occupies residues 402–484; the sequence is SIGILDIYGF…PGIFATLDDS (83 aa). IQ domains lie at 717–737 and 738–763; these read YNMAARIQRAWRRFIQRRIDS and AIKIQRAIREKKGGNQYEQLRDYGHR. Residues 769–959 form the TH1 domain; it reads KERRAMSLLG…TISVRQGRPA (191 aa). Polar residues-rich tracts occupy residues 948–963 and 972–988; these read SSTISVRQGRPANSRQ and TLLSDGPSYNSNQSKGY. The segment at 948-1106 is disordered; the sequence is SSTISVRQGR…PPPPTKQNIP (159 aa). Residues 989-1013 are compositionally biased toward low complexity; it reads GQQQHAQPSYGQQQQQQQRYAPQSH. Residues 1030-1064 show a composition bias toward polar residues; the sequence is QQNFAASAAQTAYHPQQASHARVPSTNNAHTQHNR. Over residues 1065–1082 the composition is skewed to low complexity; the sequence is QPAQQAAQPVQQAAQPAA. Residues 1092–1101 are compositionally biased toward pro residues; that stretch reads APPPPPPPPT. Positions 1103–1165 constitute an SH3 domain; that stretch reads QNIPKFQAAY…PTNYIVEYKE (63 aa).

Belongs to the TRAFAC class myosin-kinesin ATPase superfamily. Myosin family. Post-translationally, phosphorylation of the TEDS site (Ser-355) is required for the polarization of the actin cytoskeleton. Phosphorylation probably activates the myosin-I ATPase activity.

Its subcellular location is the cytoplasm. The protein localises to the cytoskeleton. It localises to the actin patch. Type-I myosin implicated in the organization of the actin cytoskeleton. Required for proper actin cytoskeleton polarization. At the cell cortex, assembles in patch-like structures together with proteins from the actin-polymerizing machinery and promotes actin assembly. Functions as actin nucleation-promoting factor (NPF) for the Arp2/3 complex. The protein is Myosin-1 (MYO1) of Kluyveromyces lactis (strain ATCC 8585 / CBS 2359 / DSM 70799 / NBRC 1267 / NRRL Y-1140 / WM37) (Yeast).